Consider the following 320-residue polypeptide: Cytochrome f (320 aa).

Positions 1–35 (MENRNTFSWVKEQITRSISVSIMIYVITRTSISNA) are cleaved as a signal peptide. Residues Tyr-36, Cys-56, Cys-59, and His-60 each contribute to the heme site. The chain crosses the membrane as a helical span at residues 286–305 (VQGLLFFFASVILAQVFLVL).

The protein belongs to the cytochrome f family. In terms of assembly, the 4 large subunits of the cytochrome b6-f complex are cytochrome b6, subunit IV (17 kDa polypeptide, petD), cytochrome f and the Rieske protein, while the 4 small subunits are PetG, PetL, PetM and PetN. The complex functions as a dimer. The cofactor is heme.

Its subcellular location is the plastid. It localises to the chloroplast thylakoid membrane. Its function is as follows. Component of the cytochrome b6-f complex, which mediates electron transfer between photosystem II (PSII) and photosystem I (PSI), cyclic electron flow around PSI, and state transitions. This Triticum aestivum (Wheat) protein is Cytochrome f (petA).